A 500-amino-acid chain; its full sequence is Glycerol-3-phosphate acyltransferase 7 (500 aa).

2 helical membrane-spanning segments follow: residues 38-58 and 235-255; these read GLIRFATLLFLWPIIALLDVL and ALIILLWIPFGIILAMIRIFV. Positions 298–303 match the HXXXXD motif motif; the sequence is HRTLMD.

Belongs to the GPAT/DAPAT family. In terms of tissue distribution, weakly or not expressed in roots, leaves, seedlings, developing siliques and flower buds.

It localises to the membrane. The catalysed reaction is sn-glycerol 3-phosphate + an acyl-CoA = a 1-acyl-sn-glycero-3-phosphate + CoA. The protein operates within phospholipid metabolism; CDP-diacylglycerol biosynthesis; CDP-diacylglycerol from sn-glycerol 3-phosphate: step 1/3. In terms of biological role, esterifies acyl-group from acyl-ACP to the sn-1 position of glycerol-3-phosphate, an essential step in glycerolipid biosynthesis. The protein is Glycerol-3-phosphate acyltransferase 7 (GPAT7) of Arabidopsis thaliana (Mouse-ear cress).